A 146-amino-acid chain; its full sequence is Hemoglobin subunit beta-1 (146 aa).

Positions 2-146 constitute a Globin domain; it reads EWTDAEKSTI…VVAAMGSRYF (145 aa). His63 and His92 together coordinate heme b.

Belongs to the globin family. In terms of assembly, heterotetramer of two alpha chains and two beta chains. In terms of tissue distribution, red blood cells.

In terms of biological role, involved in oxygen transport from gills to the various peripheral tissues. The sequence is that of Hemoglobin subunit beta-1 (hbb1) from Oncorhynchus mykiss (Rainbow trout).